Consider the following 301-residue polypeptide: Formamidopyrimidine-DNA glycosylase (301 aa).

Residue Pro2 is the Schiff-base intermediate with DNA of the active site. Glu3 (proton donor) is an active-site residue. Lys58 (proton donor; for beta-elimination activity) is an active-site residue. Residues His109, Arg131, and Lys174 each contribute to the DNA site. The segment at 265–301 (SVYDREGQACRTPGCGGTVARIVQAGRSTFYCATCQK) adopts an FPG-type zinc-finger fold. The Proton donor; for delta-elimination activity role is filled by Arg291.

The protein belongs to the FPG family. In terms of assembly, monomer. It depends on Zn(2+) as a cofactor.

The catalysed reaction is Hydrolysis of DNA containing ring-opened 7-methylguanine residues, releasing 2,6-diamino-4-hydroxy-5-(N-methyl)formamidopyrimidine.. It catalyses the reaction 2'-deoxyribonucleotide-(2'-deoxyribose 5'-phosphate)-2'-deoxyribonucleotide-DNA = a 3'-end 2'-deoxyribonucleotide-(2,3-dehydro-2,3-deoxyribose 5'-phosphate)-DNA + a 5'-end 5'-phospho-2'-deoxyribonucleoside-DNA + H(+). Its function is as follows. Involved in base excision repair of DNA damaged by oxidation or by mutagenic agents. Acts as a DNA glycosylase that recognizes and removes damaged bases. Has a preference for oxidized purines, such as 7,8-dihydro-8-oxoguanine (8-oxoG). Has AP (apurinic/apyrimidinic) lyase activity and introduces nicks in the DNA strand. Cleaves the DNA backbone by beta-delta elimination to generate a single-strand break at the site of the removed base with both 3'- and 5'-phosphates. This is Formamidopyrimidine-DNA glycosylase from Rhizobium leguminosarum bv. trifolii (strain WSM2304).